Here is a 136-residue protein sequence, read N- to C-terminus: MARTKQTARKSTGGKAPRKQLASKAARKAAPSTGGVKKPHRYKPGTVALREIRRYQKSTELLIRKLPFQRLVREIAQDFKSDLRFQSSAIGALQESVEAYLVSLFEDTNLCAIHAKRVTIQSKDIQLARRLRGERS.

Residues 1–43 (MARTKQTARKSTGGKAPRKQLASKAARKAAPSTGGVKKPHRYK) are disordered. N6,N6,N6-trimethyllysine; alternate is present on Lys-5. Lys-5 carries the post-translational modification N6,N6-dimethyllysine; alternate. N6-methyllysine; alternate occurs at positions 5 and 10. An N6-acetyllysine; alternate modification is found at Lys-10. Residue Ser-11 is modified to Phosphoserine. Lys-15 is modified (N6,N6-dimethyllysine; alternate). Residues Lys-15, Lys-19, Lys-24, Lys-28, and Lys-37 each carry the N6-acetyllysine; alternate modification. N6-methyllysine; alternate is present on residues Lys-19, Lys-24, Lys-28, and Lys-37. N6,N6,N6-trimethyllysine; alternate occurs at positions 28 and 37. An N6,N6-dimethyllysine; alternate mark is found at Lys-28 and Lys-37. N6-acetyllysine occurs at positions 57 and 65. The residue at position 80 (Lys-80) is an N6,N6,N6-trimethyllysine; alternate. An N6,N6-dimethyllysine; alternate modification is found at Lys-80. Lys-80 is modified (N6-methyllysine; alternate).

The protein belongs to the histone H3 family. The nucleosome is a histone octamer containing two molecules each of H2A, H2B, H3 and H4 assembled in one H3-H4 heterotetramer and two H2A-H2B heterodimers. The octamer wraps approximately 147 bp of DNA. In terms of processing, phosphorylated to form H3S10ph. H3S10ph promotes subsequent H3K14ac formation and is required for transcriptional activation through TBP recruitment to the promoters. Post-translationally, mono-, di- and trimethylated by the COMPASS complex to form H3K4me1/2/3. H3K4me activates gene expression by regulating transcription elongation and plays a role in telomere length maintenance. H3K4me enrichment correlates with transcription levels, and occurs in a 5' to 3' gradient with H3K4me3 enrichment at the 5'-end of genes, shifting to H3K4me2 and then H3K4me1. Methylated by set2 to form H3K36me. H3K36me represses gene expression. Methylated by dot1 to form H3K79me. H3K79me is required for association of SIR proteins with telomeric regions and for telomeric silencing. The COMPASS-mediated formation of H3K4me2/3 and the dot1-mediated formation of H3K79me require H2BK123ub1. Acetylation of histone H3 leads to transcriptional activation. H3K14ac formation by gcn5 is promoted by H3S10ph. H3K14ac can also be formed by esa1. H3K56ac formation occurs predominantly in newly synthesized H3 molecules during G1, S and G2/M of the cell cycle and may be involved in DNA repair.

Its subcellular location is the nucleus. The protein localises to the chromosome. Its function is as follows. Core component of nucleosome. Nucleosomes wrap and compact DNA into chromatin, limiting DNA accessibility to the cellular machineries which require DNA as a template. Histones thereby play a central role in transcription regulation, DNA repair, DNA replication and chromosomal stability. DNA accessibility is regulated via a complex set of post-translational modifications of histones, also called histone code, and nucleosome remodeling. This Neosartorya fischeri (strain ATCC 1020 / DSM 3700 / CBS 544.65 / FGSC A1164 / JCM 1740 / NRRL 181 / WB 181) (Aspergillus fischerianus) protein is Histone H3 (hht1).